Reading from the N-terminus, the 334-residue chain is Thiamine-binding periplasmic protein (334 aa).

The signal sequence occupies residues 1-23 (MRLLSLLTFSLFAVIGLAPAAQA). Residues 64–65 (DG), 166–167 (AT), W202, and 220–223 (YTTS) contribute to the thiamine site.

The protein belongs to the bacterial solute-binding protein 1 family. The complex is composed of two ATP-binding proteins (ThiQ), two transmembrane proteins (ThiP) and a solute-binding protein (ThiB).

The protein resides in the periplasm. Part of the ABC transporter complex ThiBPQ involved in thiamine import. The chain is Thiamine-binding periplasmic protein (thiB) from Brucella abortus biovar 1 (strain 9-941).